We begin with the raw amino-acid sequence, 506 residues long: Maturase K (506 aa).

This sequence belongs to the intron maturase 2 family. MatK subfamily.

The protein localises to the plastid. It localises to the chloroplast. In terms of biological role, usually encoded in the trnK tRNA gene intron. Probably assists in splicing its own and other chloroplast group II introns. In Rhododendron hippophaeoides (Rhododendron), this protein is Maturase K.